The primary structure comprises 232 residues: MILPRPLYSGTLIRRYQRFLADVRLDDGTVVTAHCPNSGSMKGCCQPGSAVFLSLSDNPKRRLAYTWELVMADGYWAGINTGLPNRLVREGIENGTVAELLGYERIRPEVRYGTNSRVDLLLEGPGRCWVEVKNVTLVEGGTALFPDAVTERGQKHLRELMEVVRQGDRGVIFFVVQRGDGSAVAPADAIDPVYGRLLRQAVTAGVEALAYRALVTPEEIRLTERLPVLAGE.

Belongs to the SfsA family.

The protein is Sugar fermentation stimulation protein homolog of Geobacter sulfurreducens (strain ATCC 51573 / DSM 12127 / PCA).